A 457-amino-acid polypeptide reads, in one-letter code: Flavohemoprotein-1 (457 aa).

The 156-residue stretch at 2-157 (ALSEDTIKAV…LADLLIKREE (156 aa)) folds into the Globin domain. His-106 contributes to the heme b binding site. Catalysis depends on charge relay system residues Tyr-116 and Glu-156. A reductase region spans residues 168–456 (GGWRQTRTFR…FEMFGPFKAS (289 aa)). In terms of domain architecture, FAD-binding FR-type spans 171–278 (RQTRTFRVEE…APPYGDFFLR (108 aa)). Residues Tyr-210 and 227 to 230 (RQYS) each bind FAD. 320-325 (GIGQTP) contacts NADP(+). Residue 449 to 452 (MFGP) participates in FAD binding.

It belongs to the globin family. Two-domain flavohemoproteins subfamily. This sequence in the C-terminal section; belongs to the flavoprotein pyridine nucleotide cytochrome reductase family. As to quaternary structure, monomer. Heme b is required as a cofactor. Requires FAD as cofactor.

The catalysed reaction is 2 nitric oxide + NADPH + 2 O2 = 2 nitrate + NADP(+) + H(+). It catalyses the reaction 2 nitric oxide + NADH + 2 O2 = 2 nitrate + NAD(+) + H(+). Flavohemoprotein involved in nitric oxide (NO) detoxification in an aerobic process, termed nitric oxide dioxygenase (NOD) reaction that utilizes O(2) and NAD(P)H to convert NO to nitrate, which protects the protozoan parasite from various noxious nitrogen compounds. Therefore, plays a central role in the inducible response to nitrosative stress. May also be involved in O(2) detoxification. This chain is Flavohemoprotein-1 (hmpA-1), found in Giardia intestinalis (strain P15) (Giardia lamblia).